Reading from the N-terminus, the 85-residue chain is UPF0386 protein Bind_1628 (85 aa).

It belongs to the UPF0386 family.

The protein is UPF0386 protein Bind_1628 of Beijerinckia indica subsp. indica (strain ATCC 9039 / DSM 1715 / NCIMB 8712).